The sequence spans 714 residues: Forkhead box protein P2 (714 aa).

A compositionally biased stretch (polar residues) spans 1-28; that stretch reads MMQESATETISNSSMNQNGMSTLSSQLD. 2 disordered regions span residues 1–45 and 284–338; these read MMQE…SEVS and KHGG…TGAS. The span at 291-304 shows a compositional bias: low complexity; sequence TTNNSSSTTSSTTS. The span at 314–323 shows a compositional bias: polar residues; sequence SIVNGQSSVL. The segment covering 325–336 has biased composition (basic and acidic residues); that stretch reads ARRDSSSHEETG. The C2H2-type zinc finger occupies 345–370; sequence GVCKWPGCESICEDFGQFLKHLNNEH. The tract at residues 387–408 is leucine-zipper; it reads VQQLEIQLSKERERLQAMMTHL. The CTBP1-binding stretch occupies residues 421–425; that stretch reads PLNLV. The segment covering 437–458 has biased composition (low complexity); it reads TSPQSLPQTPTTPTAPVTPITQ. Positions 437–464 are disordered; it reads TSPQSLPQTPTTPTAPVTPITQGPSVIT. A DNA-binding region (fork-head) is located at residues 503–593; the sequence is RPPFTYATLI…SQKITGSPTL (91 aa). Disordered stretches follow at residues 648 to 667 and 677 to 714; these read LDHI…QPHI and VIAE…EDLE. Positions 698 to 714 are enriched in acidic residues; the sequence is LEDDREIEEEPLSEDLE.

As to quaternary structure, forms homodimers and heterodimers with FOXP1 and FOXP4. Dimerization is required for DNA-binding. Interacts with CTBP1. Interacts with FOXP1. Interacts with TBR1. Interacts with ZMYM2.

It localises to the nucleus. Transcriptional repressor that may play a role in the specification and differentiation of lung epithelium. May also play a role in developing neural, gastrointestinal and cardiovascular tissues. Can act with CTBP1 to synergistically repress transcription but CTPBP1 is not essential. Plays a role in synapse formation by regulating SRPX2 levels. This is Forkhead box protein P2 (FOXP2) from Macaca mulatta (Rhesus macaque).